We begin with the raw amino-acid sequence, 156 residues long: Protein CURVATURE THYLAKOID 1C, chloroplastic (156 aa).

The N-terminal 55 residues, 1–55 (MASISATLPSPLLLTQRKSNLTSIQKLPFSLTRGTNDLSPLSLTRNPSSISLMVK), are a transit peptide targeting the chloroplast. At 56–83 (ASGESSDSSTDLDVVSTIQNVWDKSEDR) the chain is on the stromal side. A helical transmembrane segment spans residues 84-104 (LGLIGLGFAGIVALWASLNLI). The Lumenal portion of the chain corresponds to 105–109 (TAIDK). Residues 110-130 (LPVISSGFELVGILFSTWFTY) form a helical membrane-spanning segment. Over 131–156 (RYLLFKPDRQELSKIVKKSVADILGQ) the chain is Stromal.

It belongs to the CURT family. In terms of assembly, homo- and heterodimers and trimers. Interacts with PSAD2.

It localises to the plastid. It is found in the chloroplast thylakoid membrane. Determines thylakoid architecture by inducing membrane curvature. The polypeptide is Protein CURVATURE THYLAKOID 1C, chloroplastic (CURT1C) (Arabidopsis thaliana (Mouse-ear cress)).